A 314-amino-acid polypeptide reads, in one-letter code: Ornithine carbamoyltransferase (314 aa).

Residues S61–T64, Q88, R112, and H139–Q142 contribute to the carbamoyl phosphate site. L-ornithine-binding positions include N170, D234, and S238–M239. Carbamoyl phosphate is bound by residues C274–L275 and R302.

It belongs to the aspartate/ornithine carbamoyltransferase superfamily. OTCase family.

The protein resides in the cytoplasm. It carries out the reaction carbamoyl phosphate + L-ornithine = L-citrulline + phosphate + H(+). The protein operates within amino-acid biosynthesis; L-arginine biosynthesis; L-arginine from L-ornithine and carbamoyl phosphate: step 1/3. In terms of biological role, reversibly catalyzes the transfer of the carbamoyl group from carbamoyl phosphate (CP) to the N(epsilon) atom of ornithine (ORN) to produce L-citrulline. In Anoxybacillus flavithermus (strain DSM 21510 / WK1), this protein is Ornithine carbamoyltransferase.